The primary structure comprises 339 residues: Ketol-acid reductoisomerase (NADP(+)) (339 aa).

Positions 1–182 (MRVYYDRDAD…GGGRSGIIET (182 aa)) constitute a KARI N-terminal Rossmann domain. Residues 24-27 (YGSQ), arginine 48, serine 51, threonine 53, and 83-86 (DELQ) contribute to the NADP(+) site. Histidine 108 is a catalytic residue. Residue glycine 134 coordinates NADP(+). One can recognise a KARI C-terminal knotted domain in the interval 183 to 328 (SFREECETDL…EKLRAMMPWI (146 aa)). Mg(2+) is bound by residues aspartate 191, glutamate 195, glutamate 227, and glutamate 231. Position 252 (serine 252) interacts with substrate.

The protein belongs to the ketol-acid reductoisomerase family. It depends on Mg(2+) as a cofactor.

It carries out the reaction (2R)-2,3-dihydroxy-3-methylbutanoate + NADP(+) = (2S)-2-acetolactate + NADPH + H(+). The enzyme catalyses (2R,3R)-2,3-dihydroxy-3-methylpentanoate + NADP(+) = (S)-2-ethyl-2-hydroxy-3-oxobutanoate + NADPH + H(+). The protein operates within amino-acid biosynthesis; L-isoleucine biosynthesis; L-isoleucine from 2-oxobutanoate: step 2/4. It participates in amino-acid biosynthesis; L-valine biosynthesis; L-valine from pyruvate: step 2/4. In terms of biological role, involved in the biosynthesis of branched-chain amino acids (BCAA). Catalyzes an alkyl-migration followed by a ketol-acid reduction of (S)-2-acetolactate (S2AL) to yield (R)-2,3-dihydroxy-isovalerate. In the isomerase reaction, S2AL is rearranged via a Mg-dependent methyl migration to produce 3-hydroxy-3-methyl-2-ketobutyrate (HMKB). In the reductase reaction, this 2-ketoacid undergoes a metal-dependent reduction by NADPH to yield (R)-2,3-dihydroxy-isovalerate. This Paramagnetospirillum magneticum (strain ATCC 700264 / AMB-1) (Magnetospirillum magneticum) protein is Ketol-acid reductoisomerase (NADP(+)).